Consider the following 345-residue polypeptide: CCAAT/enhancer-binding protein beta (345 aa).

Residues 1 to 24 (MQRLVAWDPACLPLPPPPPAFKSM) are required for Lys-174 sumoylation. Arginine 3 carries the asymmetric dimethylarginine; by CARM1 modification. The segment at 24–135 (MEVANFYYEA…YGGKNCKKPA (112 aa)) is required for MYC transcriptional repression. The residue at position 43 (lysine 43) is an N6-acetyllysine; alternate. An N6-methylated lysine; alternate modification is found at lysine 43. Disordered stretches follow at residues 46–67 (PAAPPAARPGPRPPAGELGSIG) and 79–116 (LEPLGAPQAPAPATATDTFEAAPPAPAPAPASSGQHHD). Pro residues predominate over residues 47–59 (AAPPAARPGPRPP). A compositionally biased stretch (low complexity) spans 84–100 (APQAPAPATATDTFEAA). A 9aaTAD motif is present at residues 116–124 (DFLSDLFSD). N6-acetyllysine; by KAT2A and KAT2B is present on residues lysine 129 and lysine 132. Lysine 133 bears the N6-acetyllysine; by KAT2A and KAT2B; alternate mark. Lysine 133 is covalently cross-linked (Glycyl lysine isopeptide (Lys-Gly) (interchain with G-Cter in SUMO2); alternate). The disordered stretch occupies residues 157-178 (FAPLHPPPPPPPPPAELKAEPG). Residues 160–171 (LHPPPPPPPPPA) are compositionally biased toward pro residues. Lysine 174 participates in a covalent cross-link: Glycyl lysine isopeptide (Lys-Gly) (interchain with G-Cter in SUMO2); alternate. Residue lysine 174 forms a Glycyl lysine isopeptide (Lys-Gly) (interchain with G-Cter in SUMO); alternate linkage. Glycyl lysine isopeptide (Lys-Gly) (interchain with G-Cter in SUMO2) cross-links involve residues lysine 185 and lysine 187. The segment covering 218-232 (SGSSGSLSTSSSSSP) has biased composition (low complexity). The tract at residues 218–271 (SGSSGSLSTSSSSSPPGTPSPADAKAPPTACYAGAAPAPSQVKSKAKKTVDKHS) is disordered. A Phosphothreonine; by GSK3-beta modification is found at threonine 226. Residues serine 227 and serine 228 are each glycosylated (O-linked (GlcNAc) serine). Phosphoserine; by GSK3-beta is present on serine 231. The residue at position 235 (threonine 235) is a Phosphothreonine; by RPS6KA1, CDK2 and MAPK. Residues lysine 260 and lysine 262 each participate in a glycyl lysine isopeptide (Lys-Gly) (interchain with G-Cter in SUMO2) cross-link. Threonine 266 is modified (phosphothreonine; by RPS6KA1 and PKC/PRKCA). In terms of domain architecture, bZIP spans 271 to 334 (SDEYKIRRER…STLRNLFKQL (64 aa)). Residues 275 to 295 (KIRRERNNIAVRKSRDKAKMR) form a basic motif region. Serine 288 is modified (phosphoserine; by PKC/PRKCA). Positions 297–304 (LETQHKVL) are leucine-zipper. The residue at position 325 (serine 325) is a Phosphoserine; by CaMK2. Lysine 332 participates in a covalent cross-link: Glycyl lysine isopeptide (Lys-Gly) (interchain with G-Cter in SUMO2).

The protein belongs to the bZIP family. C/EBP subfamily. Binds DNA as a homodimer and as a heterodimer. Interacts with ATF4. Binds DNA as a heterodimer with ATF4. Interacts with MYB; within the complex, MYB and CEBPB bind to different promoter regions. Can form stable heterodimers with CEBPD. Can form stable heterodimers with CEBPA and CEBPE. Interacts with SIX1. Isoform 2 and isoform 3 also form heterodimers. Interacts with TRIM28 and PTGES2. Interacts with PRDM16. Interacts with CCDC85B. Forms a complex with THOC5. Interacts with ZNF638; this interaction increases transcriptional activation. Interacts with CIDEA and CIDEC; these interactions increase transcriptional activation of a subset of CEBPB downstream target genes. Interacts with DDIT3/CHOP. Interacts with EP300; recruits EP300 to chromatin. Interacts with RORA; the interaction disrupts interaction with EP300. Interacts (not methylated) with MED23, MED26, SMARCA2, SMARCB1 and SMARCC1. Interacts with KAT2A and KAT2B. Interacts with ATF5; EP300 is required for ATF5 and CEBPB interaction and DNA binding. Interacts with NFE2L1; the heterodimer represses expression of DSPP during odontoblast differentiation. Methylated. Methylation at Arg-3 by CARM1 and at Lys-43 by EHMT2 inhibit transactivation activity. Methylation is probably inhibited by phosphorylation at Thr-235. Post-translationally, sumoylated by polymeric chains of SUMO2 or SUMO3. Sumoylation at Lys-174 is required for inhibition of T-cells proliferation. In adipocytes, sumoylation at Lys-174 by PIAS1 leads to ubiquitination and subsequent proteasomal degradation. Desumoylated by SENP2, which abolishes ubiquitination and stabilizes protein levels. In terms of processing, ubiquitinated, leading to proteasomal degradation. Phosphorylated at Thr-235 by MAPK and CDK2, serves to prime phosphorylation at Thr-226 and Ser-231 by GSK3B and acquire DNA-binding as well as transactivation activities, required to induce adipogenesis. MAPK and CDK2 act sequentially to maintain Thr-235 in the primed phosphorylated state during mitotical cloning expansion and thereby progression of terminal differentiation. Phosphorylation at Thr-266 enhances transactivation activity. Phosphorylation at Ser-325 in response to calcium increases transactivation activity. Phosphorylated at Thr-235 by RPS6KA1. Post-translationally, O-glycosylated, glycosylation at Ser-227 and Ser-228 prevents phosphorylation on Thr-235, Ser-231 and Thr-226 and DNA binding activity which delays the adipocyte differentiation program. In terms of processing, acetylated. Acetylation at Lys-43 is an important and dynamic regulatory event that contributes to its ability to transactivate target genes, including those associated with adipogenesis and adipocyte function. Deacetylation by HDAC1 represses its transactivation activity. Acetylated by KAT2A and KAT2B within a cluster of lysine residues between amino acids 129-133, this acetylation is strongly induced by glucocorticoid treatment and enhances transactivation activity. Expressed at low levels in the lung, kidney and spleen.

The protein localises to the nucleus. It is found in the cytoplasm. Functionally, important transcription factor regulating the expression of genes involved in immune and inflammatory responses. Also plays a significant role in adipogenesis, as well as in the gluconeogenic pathway, liver regeneration, and hematopoiesis. The consensus recognition site is 5'-T[TG]NNGNAA[TG]-3'. Its functional capacity is governed by protein interactions and post-translational protein modifications. During early embryogenesis, plays essential and redundant roles with CEBPA. Has a promitotic effect on many cell types such as hepatocytes and adipocytes but has an antiproliferative effect on T-cells by repressing MYC expression, facilitating differentiation along the T-helper 2 lineage. Binds to regulatory regions of several acute-phase and cytokines genes and plays a role in the regulation of acute-phase reaction and inflammation. Also plays a role in intracellular bacteria killing. During adipogenesis, is rapidly expressed and, after activation by phosphorylation, induces CEBPA and PPARG, which turn on the series of adipocyte genes that give rise to the adipocyte phenotype. The delayed transactivation of the CEBPA and PPARG genes by CEBPB appears necessary to allow mitotic clonal expansion and thereby progression of terminal differentiation. Essential for female reproduction because of a critical role in ovarian follicle development. Restricts osteoclastogenesis: together with NFE2L1; represses expression of DSPP during odontoblast differentiation. In terms of biological role, essential for gene expression induction in activated macrophages. Plays a major role in immune responses such as CD4(+) T-cell response, granuloma formation and endotoxin shock. Not essential for intracellular bacteria killing. Its function is as follows. Acts as a dominant negative through heterodimerization with isoform 2. Promotes osteoblast differentiation and osteoclastogenesis. This Homo sapiens (Human) protein is CCAAT/enhancer-binding protein beta.